A 430-amino-acid polypeptide reads, in one-letter code: Asparagine--tRNA ligase (430 aa).

Belongs to the class-II aminoacyl-tRNA synthetase family. As to quaternary structure, homodimer.

The protein resides in the cytoplasm. It carries out the reaction tRNA(Asn) + L-asparagine + ATP = L-asparaginyl-tRNA(Asn) + AMP + diphosphate + H(+). The polypeptide is Asparagine--tRNA ligase (Listeria monocytogenes serovar 1/2a (strain ATCC BAA-679 / EGD-e)).